Here is a 688-residue protein sequence, read N- to C-terminus: Translation initiation factor IF-2 (688 aa).

A compositionally biased stretch (basic and acidic residues) spans 50–62; that stretch reads LLSGKEKSEKTKE. The interval 50–95 is disordered; sequence LLSGKEKSEKTKEEDDEIETTAKNPIKESINNKKSNKRDDKKEKVN. Residues 72–82 are compositionally biased toward low complexity; that stretch reads KNPIKESINNK. Basic and acidic residues predominate over residues 86–95; that stretch reads KRDDKKEKVN. One can recognise a tr-type G domain in the interval 187 to 354; sequence KRSPIITVMG…MILLSSEILE (168 aa). Residues 196-203 are G1; it reads GHVDHGKT. GTP is bound at residue 196–203; it reads GHVDHGKT. A G2 region spans residues 221-225; it reads GITQH. The tract at residues 242 to 245 is G3; it reads DTPG. Residues 242 to 246 and 296 to 299 contribute to the GTP site; these read DTPGH and NKID. The G4 stretch occupies residues 296–299; that stretch reads NKID. The tract at residues 332 to 334 is G5; sequence SAH.

It belongs to the TRAFAC class translation factor GTPase superfamily. Classic translation factor GTPase family. IF-2 subfamily.

Its subcellular location is the cytoplasm. In terms of biological role, one of the essential components for the initiation of protein synthesis. Protects formylmethionyl-tRNA from spontaneous hydrolysis and promotes its binding to the 30S ribosomal subunits. Also involved in the hydrolysis of GTP during the formation of the 70S ribosomal complex. The chain is Translation initiation factor IF-2 from Clostridium botulinum (strain 657 / Type Ba4).